The following is a 115-amino-acid chain: Large ribosomal subunit protein bL19 (115 aa).

Belongs to the bacterial ribosomal protein bL19 family.

Its function is as follows. This protein is located at the 30S-50S ribosomal subunit interface and may play a role in the structure and function of the aminoacyl-tRNA binding site. The polypeptide is Large ribosomal subunit protein bL19 (Tolumonas auensis (strain DSM 9187 / NBRC 110442 / TA 4)).